Here is a 194-residue protein sequence, read N- to C-terminus: RNA polymerase II subunit A C-terminal domain phosphatase SSU72 like protein 6 (194 aa).

This sequence belongs to the SSU72 phosphatase family.

It is found in the nucleus. It carries out the reaction O-phospho-L-seryl-[protein] + H2O = L-seryl-[protein] + phosphate. The catalysed reaction is O-phospho-L-threonyl-[protein] + H2O = L-threonyl-[protein] + phosphate. Its function is as follows. Protein phosphatase that catalyzes the dephosphorylation of the C-terminal domain of RNA polymerase II. Plays a role in RNA processing and termination. The protein is RNA polymerase II subunit A C-terminal domain phosphatase SSU72 like protein 6 of Homo sapiens (Human).